The following is a 249-amino-acid chain: Triosephosphate isomerase (249 aa).

Position 9 to 11 (9 to 11 (NWK)) interacts with substrate. Catalysis depends on His95, which acts as the Electrophile. Residue Glu167 is the Proton acceptor of the active site. Residues Gly173, Ser213, and 234–235 (GG) contribute to the substrate site.

It belongs to the triosephosphate isomerase family. As to quaternary structure, homodimer.

It is found in the cytoplasm. It carries out the reaction D-glyceraldehyde 3-phosphate = dihydroxyacetone phosphate. It participates in carbohydrate biosynthesis; gluconeogenesis. It functions in the pathway carbohydrate degradation; glycolysis; D-glyceraldehyde 3-phosphate from glycerone phosphate: step 1/1. Involved in the gluconeogenesis. Catalyzes stereospecifically the conversion of dihydroxyacetone phosphate (DHAP) to D-glyceraldehyde-3-phosphate (G3P). This Dictyoglomus turgidum (strain DSM 6724 / Z-1310) protein is Triosephosphate isomerase.